The following is a 500-amino-acid chain: Beta-glucosidase 30 (500 aa).

The first 25 residues, 1 to 25 (MGIRMGRRLLFTLFLGALFCNGVYA), serve as a signal peptide directing secretion. Gln46 is an a beta-D-glucoside binding site. Asn63 and Asn114 each carry an N-linked (GlcNAc...) asparagine glycan. Residues His149 and 194–195 (NE) contribute to the a beta-D-glucoside site. Glu195 acts as the Proton donor in catalysis. Cys214 and Cys222 are oxidised to a cystine. A beta-D-glucoside is bound at residue Tyr338. Asn363 carries N-linked (GlcNAc...) asparagine glycosylation. Glu409 serves as a coordination point for a beta-D-glucoside. Residue Glu409 is the Nucleophile of the active site. 2 N-linked (GlcNAc...) asparagine glycosylation sites follow: Asn416 and Asn417. A beta-D-glucoside is bound by residues Trp456, 463–464 (EW), and Phe472.

The protein belongs to the glycosyl hydrolase 1 family.

It carries out the reaction Hydrolysis of terminal, non-reducing beta-D-glucosyl residues with release of beta-D-glucose.. This is Beta-glucosidase 30 (BGLU30) from Oryza sativa subsp. japonica (Rice).